Consider the following 185-residue polypeptide: Ribulose bisphosphate carboxylase small subunit, chloroplastic 2 (185 aa).

The transit peptide at 1–45 (MAAVIAKSSVSAAVARPARSSVRPMAALKPAVKAAPVAAPAQANQ) directs the protein to the chloroplast. M46 bears the N-methylmethionine mark.

This sequence belongs to the RuBisCO small chain family. In terms of assembly, heterohexadecamer of 8 large and 8 small subunits.

It is found in the plastid. The protein localises to the chloroplast. Its subcellular location is the chloroplast stroma. Functionally, ruBisCO catalyzes two reactions: the carboxylation of D-ribulose 1,5-bisphosphate, the primary event in carbon dioxide fixation, as well as the oxidative fragmentation of the pentose substrate. Both reactions occur simultaneously and in competition at the same active site. Although the small subunit is not catalytic it is essential for maximal activity. The chain is Ribulose bisphosphate carboxylase small subunit, chloroplastic 2 from Chlamydomonas reinhardtii (Chlamydomonas smithii).